The primary structure comprises 911 residues: Transcription factor E2F7 (911 aa).

Serine 94 carries the phosphoserine modification. The DNA-binding element occupies 141 to 210 (RKQKSLGLLC…VAKNQYSWHG (70 aa)). Disordered stretches follow at residues 239-281 (QKEL…ANSR), 409-433 (SFNS…PYRQ), and 565-706 (SPGS…SPLQ). Positions 243-257 (NPIDHKSGERRRDGC) are enriched in basic and acidic residues. The DNA-binding element occupies 281-366 (RKDKSLKIMS…GRKPAFKWIG (86 aa)). Residue serine 409 is modified to Phosphoserine. Over residues 415-424 (ASERTQRKVN) the composition is skewed to basic and acidic residues. A compositionally biased stretch (gly residues) spans 566-579 (PGSGSGSGSVGGGS). The span at 599 to 621 (ERRLQEEEEEPATKRQCRDHEDG) shows a compositional bias: basic and acidic residues. Residues 669 to 687 (KATTNGFVSSEWGNPCSNT) show a composition bias toward polar residues. Residues 688–698 (EIEKPSEENES) are compositionally biased toward basic and acidic residues. A Phosphoserine modification is found at serine 840. The interval 873-911 (FFKTPGSLGDPVLRRKERNQSRSSSSAQRRLEISSGGTD) is disordered.

The protein belongs to the E2F/DP family. Homodimer and heterodimer: mainly forms homodimers and, to a lesser extent, heterodimers with E2F8. Dimerization is important for DNA-binding. Interacts with HIF1A. Interacts with MN1.

The protein resides in the nucleus. Its function is as follows. Atypical E2F transcription factor that participates in various processes such as angiogenesis, polyploidization of specialized cells and DNA damage response. Mainly acts as a transcription repressor that binds DNA independently of DP proteins and specifically recognizes the E2 recognition site 5'-TTTC[CG]CGC-3'. Directly represses transcription of classical E2F transcription factors such as E2F1. Acts as a regulator of S-phase by recognizing and binding the E2-related site 5'-TTCCCGCC-3' and mediating repression of G1/S-regulated genes. Plays a key role in polyploidization of cells in placenta and liver by regulating the endocycle, probably by repressing genes promoting cytokinesis and antagonizing action of classical E2F proteins (E2F1, E2F2 and/or E2F3). Required for placental development by promoting polyploidization of trophoblast giant cells. Also involved in DNA damage response: up-regulated by p53/TP53 following genotoxic stress and acts as a downstream effector of p53/TP53-dependent repression by mediating repression of indirect p53/TP53 target genes involved in DNA replication. Acts as a promoter of sprouting angiogenesis, possibly by acting as a transcription activator: associates with HIF1A, recognizes and binds the VEGFA promoter, which is different from canonical E2 recognition site, and activates expression of the VEGFA gene. Acts as a negative regulator of keratinocyte differentiation. The polypeptide is Transcription factor E2F7 (E2F7) (Bos taurus (Bovine)).